We begin with the raw amino-acid sequence, 176 residues long: Nucleoside triphosphate/diphosphate phosphatase (176 aa).

Residue Arg23 is the Proton donor of the active site. The Mg(2+) site is built by Asn87, Asp103, Asp105, Asp107, Asp120, and Glu123.

It belongs to the Ntdp family. Mg(2+) serves as cofactor.

It carries out the reaction a ribonucleoside 5'-triphosphate + H2O = a ribonucleoside 5'-diphosphate + phosphate + H(+). It catalyses the reaction a ribonucleoside 5'-diphosphate + H2O = a ribonucleoside 5'-phosphate + phosphate + H(+). Functionally, has nucleoside phosphatase activity towards nucleoside triphosphates and nucleoside diphosphates. This is Nucleoside triphosphate/diphosphate phosphatase from Bacillus cereus (strain B4264).